A 331-amino-acid chain; its full sequence is Biotin synthase (331 aa).

Residues 43 to 267 (NTVQVSTLLS…LMPASYVRLS (225 aa)) form the Radical SAM core domain. [4Fe-4S] cluster contacts are provided by cysteine 58, cysteine 62, and cysteine 65. [2Fe-2S] cluster is bound by residues cysteine 102, cysteine 133, cysteine 193, and arginine 265.

This sequence belongs to the radical SAM superfamily. Biotin synthase family. In terms of assembly, homodimer. The cofactor is [4Fe-4S] cluster. [2Fe-2S] cluster serves as cofactor.

The catalysed reaction is (4R,5S)-dethiobiotin + (sulfur carrier)-SH + 2 reduced [2Fe-2S]-[ferredoxin] + 2 S-adenosyl-L-methionine = (sulfur carrier)-H + biotin + 2 5'-deoxyadenosine + 2 L-methionine + 2 oxidized [2Fe-2S]-[ferredoxin]. The protein operates within cofactor biosynthesis; biotin biosynthesis; biotin from 7,8-diaminononanoate: step 2/2. Its function is as follows. Catalyzes the conversion of dethiobiotin (DTB) to biotin by the insertion of a sulfur atom into dethiobiotin via a radical-based mechanism. The chain is Biotin synthase from Alkalilimnicola ehrlichii (strain ATCC BAA-1101 / DSM 17681 / MLHE-1).